The following is a 199-amino-acid chain: dITP/XTP pyrophosphatase (199 aa).

Residue 8–13 coordinates substrate; sequence SGNAGK. Aspartate 69 functions as the Proton acceptor in the catalytic mechanism. Aspartate 69 serves as a coordination point for Mg(2+). Substrate contacts are provided by residues serine 70, 154–157, lysine 177, and 182–183; these read FGYN and HR.

This sequence belongs to the HAM1 NTPase family. Homodimer. Mg(2+) serves as cofactor.

It carries out the reaction XTP + H2O = XMP + diphosphate + H(+). The enzyme catalyses dITP + H2O = dIMP + diphosphate + H(+). It catalyses the reaction ITP + H2O = IMP + diphosphate + H(+). In terms of biological role, pyrophosphatase that catalyzes the hydrolysis of nucleoside triphosphates to their monophosphate derivatives, with a high preference for the non-canonical purine nucleotides XTP (xanthosine triphosphate), dITP (deoxyinosine triphosphate) and ITP. Seems to function as a house-cleaning enzyme that removes non-canonical purine nucleotides from the nucleotide pool, thus preventing their incorporation into DNA/RNA and avoiding chromosomal lesions. In Xanthomonas oryzae pv. oryzae (strain KACC10331 / KXO85), this protein is dITP/XTP pyrophosphatase.